The following is a 106-amino-acid chain: Foxo1-corepressor (106 aa).

The tract at residues 1–44 (MGGPTRRHQEEGSAECLGGPSTRAAPGPGLRDFHFTTAGPSKAD) is disordered. A Nuclear export signal motif is present at residues 78–87 (IGTLYIRLDL). Thr93 is subject to Phosphothreonine; by PKA.

Interacts with FOXO1 (via N-terminal domain); the interaction is direct, occurs in a forskolin-independent manner that prevents SIRT1 binding to FOXO1. Interacts with FOXO3. Does not interact with FOXO4. Phosphorylated at Thr-93 by PKA, leading to import into the nucleus. Expressed in adipocytes. Expressed in brown and white adipose tissue but not in liver. Protein levels in brown and white adipose tissues decrease following fasting (at protein level). Expressed in white and brown adipose tissues. Expressed in adipocytes. Not expressed in liver, skeletal muscle and brain.

The protein resides in the cytoplasm. It localises to the cytosol. It is found in the nucleus. Functionally, regulator of adipocytes that acts by repressing FOXO1 transcriptional activity. Acts by promoting acetylation of FOXO1, both by preventing the interaction between FOXO1 and SIRT1 deacetylase, and by mediating acetyltransferase activity in vitro. Regulates insulin sensitivity and energy metabolism. The chain is Foxo1-corepressor (Fcor) from Mus musculus (Mouse).